The following is a 589-amino-acid chain: Proline--tRNA ligase (589 aa).

Belongs to the class-II aminoacyl-tRNA synthetase family. ProS type 1 subfamily. In terms of assembly, homodimer.

The protein resides in the cytoplasm. The catalysed reaction is tRNA(Pro) + L-proline + ATP = L-prolyl-tRNA(Pro) + AMP + diphosphate. Functionally, catalyzes the attachment of proline to tRNA(Pro) in a two-step reaction: proline is first activated by ATP to form Pro-AMP and then transferred to the acceptor end of tRNA(Pro). As ProRS can inadvertently accommodate and process non-cognate amino acids such as alanine and cysteine, to avoid such errors it has two additional distinct editing activities against alanine. One activity is designated as 'pretransfer' editing and involves the tRNA(Pro)-independent hydrolysis of activated Ala-AMP. The other activity is designated 'posttransfer' editing and involves deacylation of mischarged Ala-tRNA(Pro). The misacylated Cys-tRNA(Pro) is not edited by ProRS. In Gloeobacter violaceus (strain ATCC 29082 / PCC 7421), this protein is Proline--tRNA ligase.